Consider the following 264-residue polypeptide: Thymidylate synthase (264 aa).

Arginine 21 lines the dUMP pocket. Histidine 51 contacts (6R)-5,10-methylene-5,6,7,8-tetrahydrofolate. 126-127 (RR) contacts dUMP. Cysteine 146 functions as the Nucleophile in the catalytic mechanism. Residues 166–169 (RSCD), asparagine 177, and 207–209 (HLY) each bind dUMP. A (6R)-5,10-methylene-5,6,7,8-tetrahydrofolate-binding site is contributed by aspartate 169. Residue alanine 263 participates in (6R)-5,10-methylene-5,6,7,8-tetrahydrofolate binding.

The protein belongs to the thymidylate synthase family. Bacterial-type ThyA subfamily. Homodimer.

It is found in the cytoplasm. It carries out the reaction dUMP + (6R)-5,10-methylene-5,6,7,8-tetrahydrofolate = 7,8-dihydrofolate + dTMP. The protein operates within pyrimidine metabolism; dTTP biosynthesis. In terms of biological role, catalyzes the reductive methylation of 2'-deoxyuridine-5'-monophosphate (dUMP) to 2'-deoxythymidine-5'-monophosphate (dTMP) while utilizing 5,10-methylenetetrahydrofolate (mTHF) as the methyl donor and reductant in the reaction, yielding dihydrofolate (DHF) as a by-product. This enzymatic reaction provides an intracellular de novo source of dTMP, an essential precursor for DNA biosynthesis. The sequence is that of Thymidylate synthase from Shewanella sp. (strain MR-4).